We begin with the raw amino-acid sequence, 110 residues long: UPF0235 protein Mpop_2087 (110 aa).

This sequence belongs to the UPF0235 family.

The sequence is that of UPF0235 protein Mpop_2087 from Methylorubrum populi (strain ATCC BAA-705 / NCIMB 13946 / BJ001) (Methylobacterium populi).